The primary structure comprises 195 residues: UDP-N-acetylbacillosamine N-acetyltransferase (195 aa).

Substrate contacts are provided by residues 13–15 (SGH), 35–36 (DD), and glycine 56. Residue histidine 125 is the Proton acceptor of the active site. Residues histidine 134, isoleucine 155, and glycine 173 each contribute to the acetyl-CoA site.

Belongs to the transferase hexapeptide repeat family. Homotrimer.

The catalysed reaction is UDP-N-acetylbacillosamine + acetyl-CoA = UDP-N,N'-diacetylbacillosamine + CoA + H(+). The protein operates within protein modification; protein glycosylation. Acetyltransferase that modifies the UDP-4-amino-sugar to form UDP-N,N'-diacetylbacillosamine in the N-linked protein glycosylation pathway. This chain is UDP-N-acetylbacillosamine N-acetyltransferase (pglD), found in Campylobacter jejuni subsp. jejuni serotype O:2 (strain ATCC 700819 / NCTC 11168).